Here is a 210-residue protein sequence, read N- to C-terminus: Orotate phosphoribosyltransferase (210 aa).

5-phospho-alpha-D-ribose 1-diphosphate-binding positions include arginine 96, lysine 100, histidine 102, and 122-130 (DDLISTGGS). Position 126 (serine 126) interacts with orotate.

The protein belongs to the purine/pyrimidine phosphoribosyltransferase family. PyrE subfamily. As to quaternary structure, homodimer. Mg(2+) is required as a cofactor.

The catalysed reaction is orotidine 5'-phosphate + diphosphate = orotate + 5-phospho-alpha-D-ribose 1-diphosphate. It participates in pyrimidine metabolism; UMP biosynthesis via de novo pathway; UMP from orotate: step 1/2. Functionally, catalyzes the transfer of a ribosyl phosphate group from 5-phosphoribose 1-diphosphate to orotate, leading to the formation of orotidine monophosphate (OMP). The sequence is that of Orotate phosphoribosyltransferase from Levilactobacillus brevis (strain ATCC 367 / BCRC 12310 / CIP 105137 / JCM 1170 / LMG 11437 / NCIMB 947 / NCTC 947) (Lactobacillus brevis).